A 354-amino-acid polypeptide reads, in one-letter code: Uroporphyrinogen decarboxylase (354 aa).

Residues 30–34 (RQAGR), D79, Y154, S209, and H333 contribute to the substrate site.

It belongs to the uroporphyrinogen decarboxylase family. In terms of assembly, homodimer.

The protein resides in the cytoplasm. It catalyses the reaction uroporphyrinogen III + 4 H(+) = coproporphyrinogen III + 4 CO2. Its pathway is porphyrin-containing compound metabolism; protoporphyrin-IX biosynthesis; coproporphyrinogen-III from 5-aminolevulinate: step 4/4. Catalyzes the decarboxylation of four acetate groups of uroporphyrinogen-III to yield coproporphyrinogen-III. The sequence is that of Uroporphyrinogen decarboxylase from Mycolicibacterium vanbaalenii (strain DSM 7251 / JCM 13017 / BCRC 16820 / KCTC 9966 / NRRL B-24157 / PYR-1) (Mycobacterium vanbaalenii).